The primary structure comprises 1374 residues: DNA-directed RNA polymerase subunit beta (1374 aa).

It belongs to the RNA polymerase beta chain family. The RNAP catalytic core consists of 2 alpha, 1 beta, 1 beta' and 1 omega subunit. When a sigma factor is associated with the core the holoenzyme is formed, which can initiate transcription.

It catalyses the reaction RNA(n) + a ribonucleoside 5'-triphosphate = RNA(n+1) + diphosphate. Its function is as follows. DNA-dependent RNA polymerase catalyzes the transcription of DNA into RNA using the four ribonucleoside triphosphates as substrates. The sequence is that of DNA-directed RNA polymerase subunit beta from Rickettsia typhi (strain ATCC VR-144 / Wilmington).